A 320-amino-acid polypeptide reads, in one-letter code: GTPase Era (320 aa).

The 169-residue stretch at 25 to 193 folds into the Era-type G domain; that stretch reads HCGFIAIVGR…RKHVRDHLPK (169 aa). The segment at 33 to 40 is G1; that stretch reads GRPNVGKS. GTP is bound at residue 33–40; that stretch reads GRPNVGKS. The segment at 59–63 is G2; it reads QTTRH. Positions 80–83 are G3; the sequence is DTPG. GTP-binding positions include 80–84 and 142–145; these read DTPGL and NKVD. The tract at residues 142–145 is G4; it reads NKVD. The tract at residues 172-174 is G5; sequence ISA. A KH type-2 domain is found at 216–302; sequence VREKLMRFTG…YLETWVKVKS (87 aa).

This sequence belongs to the TRAFAC class TrmE-Era-EngA-EngB-Septin-like GTPase superfamily. Era GTPase family. Monomer.

Its subcellular location is the cytoplasm. It localises to the cell inner membrane. Its function is as follows. An essential GTPase that binds both GDP and GTP, with rapid nucleotide exchange. Plays a role in 16S rRNA processing and 30S ribosomal subunit biogenesis and possibly also in cell cycle regulation and energy metabolism. The chain is GTPase Era from Vibrio vulnificus (strain CMCP6).